The chain runs to 109 residues: Small ribosomal subunit protein uS10 (109 aa).

Belongs to the universal ribosomal protein uS10 family. In terms of assembly, part of the 30S ribosomal subunit.

Its function is as follows. Involved in the binding of tRNA to the ribosomes. This is Small ribosomal subunit protein uS10 from Wolbachia pipientis wMel.